The chain runs to 446 residues: MSHEGEEDLLEYSDNEQEIQIDASKAAEAGETGAATSATEGDNNNNTAAGDKKGSYVGIHSTGFKDFLLKPELSRAIIDCGFEHPSEVQQHTIPQSIHGTDVLCQAKSGLGKTAVFVLSTLQQLDPVPGEVAVVVICNARELAYQIRNEYLRFSKYMPDVKTAVFYGGTPISKDAELLKNKDTAPHIVVATPGRLKALVREKYIDLSHVKNFVIDECDKVLEELDMRRDVQEIFRATPRDKQVMMFSATLSQEIRPICRRFLQNPLEIFVDDEAKLTLHGLQQYYIKLEEREKNRKLAQLLDDLEFNQVIIFVKSTTRANELTKLLNASNFPAITVHGHMKQEERIARYKAFKDFEKRICVSTDVFGRGIDIERINLAINYDLTNEADQYLHRVGRAGRFGTKGLAISFVSSKEDEEVLAKIQERFDVKIAEFPEEGIDPSTYLNN.

Serine 2 carries the N-acetylserine modification. Serine 13 and serine 37 each carry phosphoserine. Over residues 23–41 (ASKAAEAGETGAATSATEG) the composition is skewed to low complexity. The interval 23–52 (ASKAAEAGETGAATSATEGDNNNNTAAGDK) is disordered. The Q motif signature appears at 62 to 90 (TGFKDFLLKPELSRAIIDCGFEHPSEVQQ). The Helicase ATP-binding domain maps to 93–268 (IPQSIHGTDV…RRFLQNPLEI (176 aa)). 106–113 (AKSGLGKT) contacts ATP. A Phosphothreonine modification is found at threonine 169. Positions 215–218 (DECD) match the DECD box motif. The Helicase C-terminal domain maps to 280 to 441 (GLQQYYIKLE…EFPEEGIDPS (162 aa)).

Belongs to the DEAD box helicase family. DECD subfamily. As to quaternary structure, component of the TREX complex composed of at least SUB2, TEX1, YRA1 and the four THO complex components: HPR1, MFT1, THO2 and THP1. Interacts with HPR1, YRA1, and YRA2. SUB2 may mediate the interaction between the THO complex and YRA1. Associates with growing mRNP complexes during transcription. This association requires the presence of HPR1. Also interacts with SAC3. Interacts with THO1 in the presence of RNA; this interaction facilitates RNA binding of SUB2.

The protein resides in the nucleus. It carries out the reaction ATP + H2O = ADP + phosphate + H(+). Functionally, ATP-binding RNA helicase component of the TREX complex involved in transcription elongation and required for the export of mRNA out of the nucleus. SUB2 also plays a role in pre-mRNA splicing and spliceosome assembly. May be involved in rDNA and telomeric silencing, and maintenance of genome integrity. Associates with THO1, which facilitates RNA binding of SUB2 and likely plays a role in mRNA export. This Saccharomyces cerevisiae (strain ATCC 204508 / S288c) (Baker's yeast) protein is ATP-dependent RNA helicase SUB2 (SUB2).